Here is a 390-residue protein sequence, read N- to C-terminus: Elongation factor Ts 2, mitochondrial (390 aa).

The N-terminal 24 residues, 1–24 (MMIFSTAVLRLCATSRIGAVTKRA), are a transit peptide targeting the mitochondrion. The span at 30-40 (SSASSSSSSSS) shows a compositional bias: low complexity. Residues 30-54 (SSASSSSSSSSPTQSMPPQRYTHHQ) form a disordered region.

It belongs to the EF-Ts family.

It localises to the mitochondrion. Functionally, associates with the EF-Tu.GDP complex and induces the exchange of GDP to GTP. It remains bound to the aminoacyl-tRNA.EF-Tu.GTP complex up to the GTP hydrolysis stage on the ribosome. This chain is Elongation factor Ts 2, mitochondrial, found in Thalassiosira pseudonana (Marine diatom).